The primary structure comprises 355 residues: MVQRVVDRDYYDILNISVDADGDTIKKSYRRLAILYHPDKNRENPEAAREKFQKLAEAYQVLSDPKLREKYDKLGKVGAVPDAGFEDAFEFFKNLFGGDSFRDYVGELNLLKELCKMINEEPELKAIEDTEESKKQLQREESKEADRLLQERIDVLCKNLLDKLSIWTETDMSDRVTDAFKQKMQFEAELLKDESFGNEMLHAIGSTYVQRANILIQSQSFLGIRGVWGSLCAKGTLLKDTWNTVVSAVDVQSSAAALAKAEEGEEQWSKEKRDEAARELTGKVLSATWKGTRFEVQSVIRTVSDKILYDKAVPLEKRINRANALLMIGQVFLKVAPNEKSDANYFEDLMNDRGK.

Residues 9–75 (DYYDILNISV…KLREKYDKLG (67 aa)) enclose the J domain.

The protein belongs to the DnaJ family.

Its subcellular location is the cytoplasm. This is an uncharacterized protein from Schizosaccharomyces pombe (strain 972 / ATCC 24843) (Fission yeast).